We begin with the raw amino-acid sequence, 271 residues long: D-methionine-binding lipoprotein MetQ (271 aa).

The N-terminal stretch at 1–22 is a signal peptide; the sequence is MAFKFKTFAAVGALIGSLALVG. A lipid anchor (N-palmitoyl cysteine) is attached at Cys23. Cys23 carries the S-diacylglycerol cysteine lipid modification.

The protein belongs to the NlpA lipoprotein family.

The protein localises to the cell membrane. This protein is a component of a D-methionine permease, a binding protein-dependent, ATP-driven transport system. The protein is D-methionine-binding lipoprotein MetQ (metQ) of Escherichia coli (strain K12).